The primary structure comprises 219 residues: uncharacterized protein (219 aa).

Residues 139–154 show a composition bias toward basic residues; sequence PRKIKQKKKTKKKRPS. Positions 139-160 are disordered; it reads PRKIKQKKKTKKKRPSKSAPKT. A LysM domain is found at 159-217; the sequence is KTYTVKKGDTLWDLAGKFYGDSTKWRKIWKVNKKAMIKRSKRNIRQPGHWIFPGQKLKI.

This is an uncharacterized protein from Bacillus subtilis (strain 168).